The primary structure comprises 55 residues: Light-harvesting polypeptide B-800/860 beta chain (55 aa).

Topologically, residues 1-21 (ADANKVWPTGLTVAEAEELHT) are cytoplasmic. Residues 22-44 (YVTNGFRVFVGIAVVAHVLVFAA) traverse the membrane as a helical segment. Histidine 38 is an a bacteriochlorophyll binding site. Over 45 to 55 (HPWGRGGALVA) the chain is Periplasmic.

It belongs to the antenna complex beta subunit family. The core complex is formed by different alpha and beta chains, binding bacteriochlorophyll molecules, and arranged most probably in tetrameric structures disposed around the reaction center. The non-pigmented gamma chains may constitute additional components.

The protein localises to the cell inner membrane. Antenna complexes are light-harvesting systems, which transfer the excitation energy to the reaction centers. The sequence is that of Light-harvesting polypeptide B-800/860 beta chain from Rhodocyclus tenuis (Rhodospirillum tenue).